The chain runs to 299 residues: Oxygen-dependent coproporphyrinogen-III oxidase (299 aa).

Ser92 is a binding site for substrate. His96 and His106 together coordinate a divalent metal cation. Catalysis depends on His106, which acts as the Proton donor. Position 108-110 (108-110) interacts with substrate; sequence NVR. Residues His145 and His175 each coordinate a divalent metal cation. An important for dimerization region spans residues 240-275; the sequence is YVEFNLVWDRGTLFGLQTGGRTESILMSMPPLVRWE. 258 to 260 lines the substrate pocket; it reads GGR.

Belongs to the aerobic coproporphyrinogen-III oxidase family. Homodimer. It depends on a divalent metal cation as a cofactor.

It is found in the cytoplasm. The catalysed reaction is coproporphyrinogen III + O2 + 2 H(+) = protoporphyrinogen IX + 2 CO2 + 2 H2O. Its pathway is porphyrin-containing compound metabolism; protoporphyrin-IX biosynthesis; protoporphyrinogen-IX from coproporphyrinogen-III (O2 route): step 1/1. Its function is as follows. Involved in the heme biosynthesis. Catalyzes the aerobic oxidative decarboxylation of propionate groups of rings A and B of coproporphyrinogen-III to yield the vinyl groups in protoporphyrinogen-IX. In Klebsiella pneumoniae (strain 342), this protein is Oxygen-dependent coproporphyrinogen-III oxidase.